Here is a 263-residue protein sequence, read N- to C-terminus: L-aspartate dehydrogenase (263 aa).

2 residues coordinate NAD(+): A120 and N186. H216 is an active-site residue.

Belongs to the L-aspartate dehydrogenase family.

It catalyses the reaction L-aspartate + NADP(+) + H2O = oxaloacetate + NH4(+) + NADPH + H(+). The catalysed reaction is L-aspartate + NAD(+) + H2O = oxaloacetate + NH4(+) + NADH + H(+). It functions in the pathway cofactor biosynthesis; NAD(+) biosynthesis; iminoaspartate from L-aspartate (dehydrogenase route): step 1/1. In terms of biological role, specifically catalyzes the NAD or NADP-dependent dehydrogenation of L-aspartate to iminoaspartate. The protein is L-aspartate dehydrogenase of Psychrobacter cryohalolentis (strain ATCC BAA-1226 / DSM 17306 / VKM B-2378 / K5).